Reading from the N-terminus, the 303-residue chain is Probable alpha-L-glutamate ligase (303 aa).

One can recognise an ATP-grasp domain in the interval 104-287 (LQLLAREGID…IAGMMIEFIE (184 aa)). ATP is bound by residues Lys141, 178 to 179 (EY), Asp187, and 211 to 213 (RSN). 3 residues coordinate Mg(2+): Asp248, Glu260, and Asn262. The Mn(2+) site is built by Asp248, Glu260, and Asn262.

This sequence belongs to the RimK family. It depends on Mg(2+) as a cofactor. The cofactor is Mn(2+).

The protein is Probable alpha-L-glutamate ligase of Pectobacterium carotovorum subsp. carotovorum (strain PC1).